We begin with the raw amino-acid sequence, 309 residues long: Homoserine kinase (309 aa).

Residue 91–101 participates in ATP binding; the sequence is PIGSGLGSSAC.

Belongs to the GHMP kinase family. Homoserine kinase subfamily.

The protein localises to the cytoplasm. The enzyme catalyses L-homoserine + ATP = O-phospho-L-homoserine + ADP + H(+). Its pathway is amino-acid biosynthesis; L-threonine biosynthesis; L-threonine from L-aspartate: step 4/5. In terms of biological role, catalyzes the ATP-dependent phosphorylation of L-homoserine to L-homoserine phosphate. This is Homoserine kinase (thrB) from Serratia marcescens.